The following is an 855-amino-acid chain: Beta-mannosidase B (855 aa).

The N-linked (GlcNAc...) asparagine glycan is linked to asparagine 98. Catalysis depends on glutamate 430, which acts as the Proton donor. N-linked (GlcNAc...) asparagine glycosylation is found at asparagine 693 and asparagine 730.

The protein belongs to the glycosyl hydrolase 2 family. Beta-mannosidase B subfamily. As to quaternary structure, homodimer.

It is found in the secreted. It carries out the reaction Hydrolysis of terminal, non-reducing beta-D-mannose residues in beta-D-mannosides.. It participates in glycan metabolism; N-glycan degradation. In terms of biological role, exoglycosidase that cleaves the single beta-linked mannose residue from the non-reducing end of beta-mannosidic oligosaccharides of various complexity and length. Prefers mannobiose over mannotriose. Is also severely restricted by galactosyl substitutions at the +1 subsite. Has no activity against polymeric mannan. The sequence is that of Beta-mannosidase B (man9) from Thermothelomyces thermophilus (Myceliophthora thermophila).